A 213-amino-acid chain; its full sequence is mRNA-decapping protein D9 (213 aa).

Positions lysine 30–leucine 209 constitute a Nudix hydrolase domain. The short motif at glycine 111 to aspartate 132 is the Nudix box element. Glutamate 117 is a Mg(2+) binding site. Glutamate 126 serves as the catalytic Nucleophile. Mg(2+) is bound by residues glutamate 130 and aspartate 151.

Belongs to the Nudix hydrolase family. Mg(2+) serves as cofactor. Requires Mn(2+) as cofactor.

Its function is as follows. Decapping enzyme required for the removal of the 5'-end m7GpppN cap tethered to viral and host mRNAs to allow their decay in cells. May therefore accelerate viral and cellular mRNA turnover to eliminate competing host mRNAs and allow stage-specific synthesis of viral proteins. Acceleration of the turnover of cellular transcripts may even promote the shutoff of host protein synthesis. Does not cleave unmethylated RNAs or RNAs shorter than 24 nucleotides. The polypeptide is mRNA-decapping protein D9 (Homo sapiens (Human)).